We begin with the raw amino-acid sequence, 323 residues long: Cyclin-H (323 aa).

Residue Ser5 is modified to Phosphoserine; by CDK8. Ser132 is subject to Phosphoserine. The tract at residues 299-323 (DDDYVPKKSKHEEEEWTDDDLVESL) is disordered. Positions 302–311 (YVPKKSKHEE) are enriched in basic and acidic residues. Positions 312–323 (EEWTDDDLVESL) are enriched in acidic residues. At Thr315 the chain carries Phosphothreonine. Position 322 is a phosphoserine (Ser322).

It belongs to the cyclin family. Cyclin C subfamily. As to quaternary structure, associates primarily with CDK7 and MAT1 to form the CAK complex. CAK can further associate with the core-TFIIH to form the TFIIH basal transcription factor.

It localises to the nucleus. Regulates CDK7, the catalytic subunit of the CDK-activating kinase (CAK) enzymatic complex. CAK activates the cyclin-associated kinases CDK1, CDK2, CDK4 and CDK6 by threonine phosphorylation. CAK complexed to the core-TFIIH basal transcription factor activates RNA polymerase II by serine phosphorylation of the repetitive C-terminal domain (CTD) of its large subunit (POLR2A), allowing its escape from the promoter and elongation of the transcripts. Involved in cell cycle control and in RNA transcription by RNA polymerase II. Its expression and activity are constant throughout the cell cycle. This Macaca fascicularis (Crab-eating macaque) protein is Cyclin-H (CCNH).